The sequence spans 145 residues: D-aminoacyl-tRNA deacylase (145 aa).

Positions 137–138 (GP) match the Gly-cisPro motif, important for rejection of L-amino acids motif.

This sequence belongs to the DTD family. In terms of assembly, homodimer.

Its subcellular location is the cytoplasm. It carries out the reaction glycyl-tRNA(Ala) + H2O = tRNA(Ala) + glycine + H(+). The catalysed reaction is a D-aminoacyl-tRNA + H2O = a tRNA + a D-alpha-amino acid + H(+). Its function is as follows. An aminoacyl-tRNA editing enzyme that deacylates mischarged D-aminoacyl-tRNAs. Also deacylates mischarged glycyl-tRNA(Ala), protecting cells against glycine mischarging by AlaRS. Acts via tRNA-based rather than protein-based catalysis; rejects L-amino acids rather than detecting D-amino acids in the active site. By recycling D-aminoacyl-tRNA to D-amino acids and free tRNA molecules, this enzyme counteracts the toxicity associated with the formation of D-aminoacyl-tRNA entities in vivo and helps enforce protein L-homochirality. This is D-aminoacyl-tRNA deacylase from Shewanella sp. (strain MR-4).